A 341-amino-acid chain; its full sequence is S-adenosylmethionine:tRNA ribosyltransferase-isomerase (341 aa).

This sequence belongs to the QueA family. As to quaternary structure, monomer.

It localises to the cytoplasm. The enzyme catalyses 7-aminomethyl-7-carbaguanosine(34) in tRNA + S-adenosyl-L-methionine = epoxyqueuosine(34) in tRNA + adenine + L-methionine + 2 H(+). It functions in the pathway tRNA modification; tRNA-queuosine biosynthesis. Transfers and isomerizes the ribose moiety from AdoMet to the 7-aminomethyl group of 7-deazaguanine (preQ1-tRNA) to give epoxyqueuosine (oQ-tRNA). This Staphylococcus epidermidis (strain ATCC 12228 / FDA PCI 1200) protein is S-adenosylmethionine:tRNA ribosyltransferase-isomerase.